A 286-amino-acid polypeptide reads, in one-letter code: MKAKPLSQDPGSKRYAYRINKEENRKELKHVKINESSLVQEGQKIDLPKKRYYRQRAHSNPFSDHQLEYPVSPQDMDWSKLYPYYKNAENGQMTKKVTIADIGCGFGGLMIDLSPAFPEDLILGMEIRVQVTNYVEDRIIALRNNTASKHGFQNINVLRGNAMKFLPNFFEKGQLSKMFFCFPDPHFKQRKHKARIITNTLLSEYAYVLKEGGVVYTITDVKDLHEWMVKHLEEHPLFERLSKEWEENDECVKIMRNATEEGKKVERKKGDKFVACFTRLPTPAIL.

Phosphoserine occurs at positions 7 and 59. S-adenosyl-L-methionine is bound by residues Gly103, 126 to 127 (EI), 161 to 162 (NA), and Cys181. Asp184 is a catalytic residue. Position 259–261 (259–261 (TEE)) interacts with S-adenosyl-L-methionine.

The protein belongs to the class I-like SAM-binding methyltransferase superfamily. TrmB family. In terms of assembly, forms a complex with TRM82.

The protein localises to the nucleus. The enzyme catalyses guanosine(46) in tRNA + S-adenosyl-L-methionine = N(7)-methylguanosine(46) in tRNA + S-adenosyl-L-homocysteine. It functions in the pathway tRNA modification; N(7)-methylguanine-tRNA biosynthesis. Its function is as follows. Methyltransferase that catalyzes the formation of N(7)-methylguanine at position 46 (m7G46) in tRNA, a modification required to maintain stability of tRNAs; its absence resulting in tRNA decay. Both the D-stem and T-stem structures of tRNAs are required for efficient methyltransferase activity. This Saccharomyces cerevisiae (strain RM11-1a) (Baker's yeast) protein is tRNA (guanine-N(7)-)-methyltransferase.